The chain runs to 981 residues: Peroxisomal ATPase PEX6 (981 aa).

Arg119 bears the Omega-N-methylarginine mark. ATP contacts are provided by residues 471–478 (GPPGSGKT) and 745–752 (GPPGTGKT).

The protein belongs to the AAA ATPase family. In terms of assembly, interacts with PEX1; forming the PEX1-PEX6 AAA ATPase complex, which is composed of a heterohexamer formed by a trimer of PEX1-PEX6 dimers. Interacts with PEX26; interaction is direct and promotes recruitment to peroxisomal membranes. Interacts with ZFAND6. As to expression, in the teeth, expressed in ameloblasts and odontoblasts. Expressed in the retina, at higher levels in the ganglion cell layer and photoreceptor layer at the joint between the outer and inner segments.

It localises to the cytoplasm. The protein localises to the cytosol. Its subcellular location is the peroxisome membrane. It is found in the cell projection. The protein resides in the cilium. It localises to the photoreceptor outer segment. The enzyme catalyses ATP + H2O = ADP + phosphate + H(+). Component of the PEX1-PEX6 AAA ATPase complex, a protein dislocase complex that mediates the ATP-dependent extraction of the PEX5 receptor from peroxisomal membranes, an essential step for PEX5 recycling. Specifically recognizes PEX5 monoubiquitinated at 'Cys-11', and pulls it out of the peroxisome lumen through the PEX2-PEX10-PEX12 retrotranslocation channel. Extraction by the PEX1-PEX6 AAA ATPase complex is accompanied by unfolding of the TPR repeats and release of bound cargo from PEX5. The sequence is that of Peroxisomal ATPase PEX6 from Mus musculus (Mouse).